The chain runs to 388 residues: Mannitol-1-phosphate 5-dehydrogenase (388 aa).

5 to 16 (AVHFGGGNIGRG) is an NAD(+) binding site. Residue Lys213 is part of the active site.

This sequence belongs to the mannitol dehydrogenase family. Monomer.

The catalysed reaction is D-mannitol 1-phosphate + NAD(+) = beta-D-fructose 6-phosphate + NADH + H(+). Its function is as follows. Catalyzes the NAD(H)-dependent interconversion of D-fructose 6-phosphate and D-mannitol 1-phosphate in the mannitol metabolic pathway. The protein is Mannitol-1-phosphate 5-dehydrogenase of Coccidioides immitis (strain RS) (Valley fever fungus).